The primary structure comprises 102 residues: Acid shock protein (102 aa).

An N-terminal signal peptide occupies residues 1–21 (MKKVLGLVVAAAMGLSSAAFA). Over residues 22-41 (AETATTPAPTATTTKAAPAK) the composition is skewed to low complexity. The propeptide occupies 22–58 (AETATTPAPTATTTKAAPAKTTHHKKQHKAAPAQKAQ). Residues 22 to 102 (AETATTPAPT…PAKPAAQPAA (81 aa)) form a disordered region. Basic residues predominate over residues 80–90 (AAKKHAGKHSH). Residues 91–102 (QQPAKPAAQPAA) are compositionally biased toward low complexity.

This sequence belongs to the Asr family. Post-translationally, proteolytic processing gives rise to the active protein.

The protein localises to the periplasm. Functionally, required for growth and/or survival at acidic conditions. The sequence is that of Acid shock protein from Escherichia coli (strain SE11).